Reading from the N-terminus, the 78-residue chain is Small ribosomal subunit protein bS18 (78 aa).

The protein belongs to the bacterial ribosomal protein bS18 family. As to quaternary structure, part of the 30S ribosomal subunit. Forms a tight heterodimer with protein bS6.

Functionally, binds as a heterodimer with protein bS6 to the central domain of the 16S rRNA, where it helps stabilize the platform of the 30S subunit. This Lactobacillus delbrueckii subsp. bulgaricus (strain ATCC 11842 / DSM 20081 / BCRC 10696 / JCM 1002 / NBRC 13953 / NCIMB 11778 / NCTC 12712 / WDCM 00102 / Lb 14) protein is Small ribosomal subunit protein bS18.